Consider the following 418-residue polypeptide: Glutamyl-tRNA reductase (418 aa).

Substrate contacts are provided by residues 49 to 52 (TCNR), Ser109, 114 to 116 (EPQ), and Gln120. The active-site Nucleophile is Cys50. 189–194 (GAGETI) is an NADP(+) binding site.

The protein belongs to the glutamyl-tRNA reductase family. As to quaternary structure, homodimer.

It catalyses the reaction (S)-4-amino-5-oxopentanoate + tRNA(Glu) + NADP(+) = L-glutamyl-tRNA(Glu) + NADPH + H(+). The protein operates within porphyrin-containing compound metabolism; protoporphyrin-IX biosynthesis; 5-aminolevulinate from L-glutamyl-tRNA(Glu): step 1/2. Catalyzes the NADPH-dependent reduction of glutamyl-tRNA(Glu) to glutamate 1-semialdehyde (GSA). In Escherichia coli O45:K1 (strain S88 / ExPEC), this protein is Glutamyl-tRNA reductase.